The chain runs to 295 residues: Phosphatidylserine decarboxylase proenzyme (295 aa).

Catalysis depends on charge relay system; for autoendoproteolytic cleavage activity residues D113, H169, and S256. S256 functions as the Schiff-base intermediate with substrate; via pyruvic acid; for decarboxylase activity in the catalytic mechanism. S256 carries the post-translational modification Pyruvic acid (Ser); by autocatalysis.

This sequence belongs to the phosphatidylserine decarboxylase family. PSD-B subfamily. Prokaryotic type II sub-subfamily. Heterodimer of a large membrane-associated beta subunit and a small pyruvoyl-containing alpha subunit. Requires pyruvate as cofactor. In terms of processing, is synthesized initially as an inactive proenzyme. Formation of the active enzyme involves a self-maturation process in which the active site pyruvoyl group is generated from an internal serine residue via an autocatalytic post-translational modification. Two non-identical subunits are generated from the proenzyme in this reaction, and the pyruvate is formed at the N-terminus of the alpha chain, which is derived from the carboxyl end of the proenzyme. The autoendoproteolytic cleavage occurs by a canonical serine protease mechanism, in which the side chain hydroxyl group of the serine supplies its oxygen atom to form the C-terminus of the beta chain, while the remainder of the serine residue undergoes an oxidative deamination to produce ammonia and the pyruvoyl prosthetic group on the alpha chain. During this reaction, the Ser that is part of the protease active site of the proenzyme becomes the pyruvoyl prosthetic group, which constitutes an essential element of the active site of the mature decarboxylase.

The protein localises to the cell membrane. It catalyses the reaction a 1,2-diacyl-sn-glycero-3-phospho-L-serine + H(+) = a 1,2-diacyl-sn-glycero-3-phosphoethanolamine + CO2. Its pathway is phospholipid metabolism; phosphatidylethanolamine biosynthesis; phosphatidylethanolamine from CDP-diacylglycerol: step 2/2. In terms of biological role, catalyzes the formation of phosphatidylethanolamine (PtdEtn) from phosphatidylserine (PtdSer). In Clostridium novyi (strain NT), this protein is Phosphatidylserine decarboxylase proenzyme.